Reading from the N-terminus, the 350-residue chain is Renin receptor (350 aa).

The N-terminal stretch at 1-17 is a signal peptide; the sequence is MAVLVVLLSSLVSSALA. Topologically, residues 18-302 are extracellular; that stretch reads NEFSILRSPG…YNLAYKYNLE (285 aa). Residues 303–323 form a helical membrane-spanning segment; it reads YSVVFNLVLWIMTGLALAVII. Residues 324-350 lie on the Cytoplasmic side of the membrane; that stretch reads TSYNIWNMDPGYDSIIYRMTNQKIRMD. The Mediates retrograde transport to the ER signature appears at 346–350; sequence KIRMD.

Interacts with renin. Accessory component of the multisubunit proton-transporting vacuolar (V)-ATPase protein pump. Interacts (via N-terminus) with ATP6AP1 (via N-terminus). Interacts with ATP6V0D1; ATP6V0D1 is a V-ATPase complex subunit and the interaction promotes V-ATPase complex assembly. Interacts with TMEM9; TMEM9 is a V-ATPase assembly regulator and the interaction induces the interaction with ATP6V0D1. Interacts with VMA21 (via N-terminus); VMA21 is a V-ATPase accessory component. Post-translationally, phosphorylated. Proteolytically cleaved by a furin-like convertase in the trans-Golgi network to generate N- and C-terminal fragments. As to expression, expressed in the brain.

The protein resides in the endoplasmic reticulum membrane. It localises to the lysosome membrane. The protein localises to the cytoplasmic vesicle. It is found in the autophagosome membrane. Its subcellular location is the cell projection. The protein resides in the dendritic spine membrane. It localises to the axon. The protein localises to the endosome membrane. It is found in the clathrin-coated vesicle membrane. Its subcellular location is the secretory vesicle. The protein resides in the synaptic vesicle membrane. Multifunctional protein which functions as a renin, prorenin cellular receptor and is involved in the assembly of the lysosomal proton-transporting V-type ATPase (V-ATPase) and the acidification of the endo-lysosomal system. May mediate renin-dependent cellular responses by activating ERK1 and ERK2. By increasing the catalytic efficiency of renin in AGT/angiotensinogen conversion to angiotensin I, may also play a role in the renin-angiotensin system (RAS). Through its function in V-type ATPase (v-ATPase) assembly and acidification of the lysosome it regulates protein degradation and may control different signaling pathways important for proper brain development, synapse morphology and synaptic transmission. The protein is Renin receptor (Atp6ap2) of Rattus norvegicus (Rat).